The primary structure comprises 425 residues: Glucose-1-phosphate adenylyltransferase (425 aa).

Alpha-D-glucose 1-phosphate is bound by residues Tyr110, Gly175, 190 to 191 (EK), and Ser208.

This sequence belongs to the bacterial/plant glucose-1-phosphate adenylyltransferase family. In terms of assembly, homotetramer.

The catalysed reaction is alpha-D-glucose 1-phosphate + ATP + H(+) = ADP-alpha-D-glucose + diphosphate. Its pathway is glycan biosynthesis; glycogen biosynthesis. In terms of biological role, involved in the biosynthesis of ADP-glucose, a building block required for the elongation reactions to produce glycogen. Catalyzes the reaction between ATP and alpha-D-glucose 1-phosphate (G1P) to produce pyrophosphate and ADP-Glc. In Nitrosospira multiformis (strain ATCC 25196 / NCIMB 11849 / C 71), this protein is Glucose-1-phosphate adenylyltransferase.